Here is a 172-residue protein sequence, read N- to C-terminus: 3-hydroxydecanoyl-[acyl-carrier-protein] dehydratase (172 aa).

His70 is a catalytic residue.

The protein belongs to the thioester dehydratase family. FabA subfamily. In terms of assembly, homodimer.

The protein resides in the cytoplasm. The catalysed reaction is a (3R)-hydroxyacyl-[ACP] = a (2E)-enoyl-[ACP] + H2O. The enzyme catalyses (3R)-hydroxydecanoyl-[ACP] = (2E)-decenoyl-[ACP] + H2O. It catalyses the reaction (2E)-decenoyl-[ACP] = (3Z)-decenoyl-[ACP]. The protein operates within lipid metabolism; fatty acid biosynthesis. Necessary for the introduction of cis unsaturation into fatty acids. Catalyzes the dehydration of (3R)-3-hydroxydecanoyl-ACP to E-(2)-decenoyl-ACP and then its isomerization to Z-(3)-decenoyl-ACP. Can catalyze the dehydratase reaction for beta-hydroxyacyl-ACPs with saturated chain lengths up to 16:0, being most active on intermediate chain length. The polypeptide is 3-hydroxydecanoyl-[acyl-carrier-protein] dehydratase (Xylella fastidiosa (strain M12)).